A 202-amino-acid polypeptide reads, in one-letter code: Inner membrane-spanning protein YciB (202 aa).

The next 6 membrane-spanning stretches (helical) occupy residues 3-23 (FFLD…AGAA), 46-66 (ILIA…IVWL), 74-94 (MLWV…VFHN), 100-120 (WKPT…ALLF), 145-165 (LAWI…AYGY), and 173-193 (FKLF…GFYL).

It belongs to the YciB family.

It localises to the cell inner membrane. Its function is as follows. Plays a role in cell envelope biogenesis, maintenance of cell envelope integrity and membrane homeostasis. This Azoarcus sp. (strain BH72) protein is Inner membrane-spanning protein YciB.